The primary structure comprises 1396 residues: ABC-type transporter cicA (1396 aa).

The segment at 1-40 (MRLSSEAKIAESGGQPPTAGSRSETGSESTEAESADPKAQ) is disordered. The span at 18–29 (TAGSRSETGSES) shows a compositional bias: low complexity. 3 helical membrane passes run 142–162 (FLLGGFCHLISSLLIVFAPYL), 191–211 (GFVVGITVMQAIQSLCTNQFL), and 300–320 (MFHISWTAPVSIIVALILLLV). The ABC transmembrane type-1 1 domain occupies 143–466 (LLGGFCHLIS…LPLVLGQITD (324 aa)). Asn321 carries an N-linked (GlcNAc...) asparagine glycan. Transmembrane regions (helical) follow at residues 324–344 (YSALAGFGLLVIGMPFLTYAV), 409–429 (ILCVSMAIPVFASMLSFITYA), and 440–460 (IFSSLALFNSLRMPLNLLPLV). The span at 510–533 (AADKEAEKVEKKANPRRTEPKSEA) shows a compositional bias: basic and acidic residues. A disordered region spans residues 510–543 (AADKEAEKVEKKANPRRTEPKSEAPTDSAESDEP). The 227-residue stretch at 525–751 (RRTEPKSEAP…NDLFKQLMST (227 aa)) folds into the ABC transporter 1 domain. 563-570 (GTVGSGKS) serves as a coordination point for ATP. N-linked (GlcNAc...) asparagine glycosylation occurs at Asn604. The segment at 751 to 787 (TASQDSKEDEEEATEVVEEEAEKQAQQEPTKPAAALM) is disordered. Residues 757-771 (KEDEEEATEVVEEEA) show a composition bias toward acidic residues. 2 helical membrane-spanning segments follow: residues 816 to 836 (LAILFLLAFANVVNVWTNLWL) and 852 to 872 (YIGIYAGLGAGSALTMFIFST). Residues 816-1093 (LAILFLLAFA…TVRQLAEVEN (278 aa)) enclose the ABC transmembrane type-1 2 domain. Asn880 is a glycosylation site (N-linked (GlcNAc...) asparagine). The next 4 helical transmembrane spans lie at 930-947 (MYAITITMIVSIMILIIV), 951-970 (YFAIALVPLFLLFLTASNYY), 1036-1056 (LSVRLDAVAVLLVFVTGVLVV), and 1065-1085 (SISGLVLSYILAIAQMLQFTV). Asn1096, Asn1150, and Asn1154 each carry an N-linked (GlcNAc...) asparagine glycan. An ABC transporter 2 domain is found at 1131–1380 (ITFDNVAMRY…EDGIFRAMCE (250 aa)). 1165–1172 (GRTGAGKS) contacts ATP.

The protein belongs to the ABC transporter superfamily. ABCC family. Conjugate transporter (TC 3.A.1.208) subfamily.

It is found in the cell membrane. Functionally, ABC-type transporter; part of the gene cluster that mediates the biosynthesis of cichorine, a phytotoxin active against knapweed, corn, and soybeans. CicA is probably involved in the secretion of cichorine. This is ABC-type transporter cicA from Emericella nidulans (strain FGSC A4 / ATCC 38163 / CBS 112.46 / NRRL 194 / M139) (Aspergillus nidulans).